The primary structure comprises 149 residues: F420H(2)-dependent quinone reductase MT1299 (149 aa).

Residues 48 to 50, 54 to 59, 70 to 73, 81 to 85, and Tyr-130 contribute to the coenzyme F420-(gamma-Glu)n site; these read AKT, RTTSLT, VASK, and GWYHN.

Belongs to the F420H(2)-dependent quinone reductase family.

It is found in the cell membrane. It carries out the reaction oxidized coenzyme F420-(gamma-L-Glu)(n) + a quinol + H(+) = reduced coenzyme F420-(gamma-L-Glu)(n) + a quinone. Functionally, involved in a F420-dependent anti-oxidant mechanism that protects M.tuberculosis against oxidative stress and bactericidal agents. Catalyzes the F420H(2)-dependent two-electron reduction of quinones to dihydroquinones, thereby preventing the formation of cytotoxic semiquinones obtained by the one-electron reduction pathway. In vitro, catalyzes the reduction of menadione to menadiol; since menaquinone is the sole quinone electron carrier in the respiratory chain in M.tuberculosis, the physiological electron acceptor for Fqr-mediated F420H(2) oxidation is therefore likely to be the endogenous menaquinone found in the membrane fraction of M.tuberculosis. The protein is F420H(2)-dependent quinone reductase MT1299 of Mycobacterium tuberculosis (strain CDC 1551 / Oshkosh).